The following is a 292-amino-acid chain: Phosphatidylglycerol--prolipoprotein diacylglyceryl transferase (292 aa).

4 helical membrane passes run Ile7–Glu27, Phe45–Ala65, Leu83–Trp103, and Ile116–Ile136. Arg165 provides a ligand contact to a 1,2-diacyl-sn-glycero-3-phospho-(1'-sn-glycerol). Helical transmembrane passes span Pro204–Val224 and Ala264–Ile284.

The protein belongs to the Lgt family.

It localises to the cell inner membrane. The catalysed reaction is L-cysteinyl-[prolipoprotein] + a 1,2-diacyl-sn-glycero-3-phospho-(1'-sn-glycerol) = an S-1,2-diacyl-sn-glyceryl-L-cysteinyl-[prolipoprotein] + sn-glycerol 1-phosphate + H(+). It functions in the pathway protein modification; lipoprotein biosynthesis (diacylglyceryl transfer). Functionally, catalyzes the transfer of the diacylglyceryl group from phosphatidylglycerol to the sulfhydryl group of the N-terminal cysteine of a prolipoprotein, the first step in the formation of mature lipoproteins. In Fervidobacterium nodosum (strain ATCC 35602 / DSM 5306 / Rt17-B1), this protein is Phosphatidylglycerol--prolipoprotein diacylglyceryl transferase.